The sequence spans 557 residues: Isocitrate lyase (557 aa).

Thr53 is subject to Phosphothreonine. 106–108 serves as a coordination point for substrate; that stretch reads SGW. Asp179 is a Mg(2+) binding site. Cys217 serves as the catalytic Proton acceptor. Residues 218–219, Arg254, 437–441, and Thr471 each bind substrate; these read GH and NLSPS.

Belongs to the isocitrate lyase/PEP mutase superfamily. Isocitrate lyase family. Homotetramer. It depends on Mg(2+) as a cofactor. In terms of processing, phosphorylated in response to elevated glucose levels, leading first to reversible inactivation of the enzyme (short-term inactivation), and at a later stage to proteolytic degradation of the protein (long-term inactivation).

It is found in the cytoplasm. The protein localises to the secreted. The protein resides in the extracellular space. It localises to the extracellular matrix. Its subcellular location is the vacuole. The enzyme catalyses D-threo-isocitrate = glyoxylate + succinate. It carries out the reaction (2S,3R)-3-hydroxybutane-1,2,3-tricarboxylate = pyruvate + succinate. The protein operates within carbohydrate metabolism; glyoxylate cycle; (S)-malate from isocitrate: step 1/2. Its activity is regulated as follows. Phosphorylated and inactivated after addition of glucose to the cell culture (repressing conditions). In terms of biological role, catalyzes the formation of succinate and glyoxylate from isocitrate, a key step of the glyoxylate cycle, which operates as an anaplerotic route for replenishing the tricarboxylic acid cycle. Required for growth on ethanol or acetate, but dispensable when fermentable carbon sources are available. Also acts on 2-methylisocitrate. This chain is Isocitrate lyase, found in Saccharomyces cerevisiae (strain ATCC 204508 / S288c) (Baker's yeast).